The chain runs to 305 residues: Ankyrin repeat domain-containing protein 23 (305 aa).

The stretch at 41–72 (QEAVAREKLKLEEEKKKKLERFNSTRFNLDNL) forms a coiled coil. Residues 83 to 92 (KKRLRHRVPP) are compositionally biased toward basic residues. A disordered region spans residues 83–104 (KKRLRHRVPPRKPEPLVKPQSQ). ANK repeat units follow at residues 143–172 (LHRT…TVDA), 176–205 (LDRT…RVNA), 209–238 (IGST…HLNA), and 242–271 (EGDT…ELGV). The tract at residues 178–195 (RTPVFWACRGGHLVILKQ) is interaction with TTN.

As to quaternary structure, interacts with titin/TTN and MYPN. Mainly expressed in heart, skeletal muscle and brown adipose tissues.

It is found in the nucleus. Its function is as follows. May be involved in the energy metabolism. Could be a molecular link between myofibrillar stretch-induced signaling pathways and muscle gene expression. The polypeptide is Ankyrin repeat domain-containing protein 23 (ANKRD23) (Homo sapiens (Human)).